The chain runs to 246 residues: 1-(5-phosphoribosyl)-5-[(5-phosphoribosylamino)methylideneamino] imidazole-4-carboxamide isomerase (246 aa).

The active-site Proton acceptor is the Asp12. Asp134 serves as the catalytic Proton donor.

It belongs to the HisA/HisF family.

It localises to the cytoplasm. It catalyses the reaction 1-(5-phospho-beta-D-ribosyl)-5-[(5-phospho-beta-D-ribosylamino)methylideneamino]imidazole-4-carboxamide = 5-[(5-phospho-1-deoxy-D-ribulos-1-ylimino)methylamino]-1-(5-phospho-beta-D-ribosyl)imidazole-4-carboxamide. The protein operates within amino-acid biosynthesis; L-histidine biosynthesis; L-histidine from 5-phospho-alpha-D-ribose 1-diphosphate: step 4/9. This chain is 1-(5-phosphoribosyl)-5-[(5-phosphoribosylamino)methylideneamino] imidazole-4-carboxamide isomerase, found in Haloarcula marismortui (strain ATCC 43049 / DSM 3752 / JCM 8966 / VKM B-1809) (Halobacterium marismortui).